We begin with the raw amino-acid sequence, 182 residues long: Putative manganese efflux pump MntP 2 (182 aa).

Transmembrane regions (helical) follow at residues 2–22 (IELT…SIAL), 37–57 (AGGF…YLGV), 63–83 (IGGI…LKMI), 104–123 (LLLL…LTLT), 127–149 (LPLW…GGVH), and 162–182 (AEYL…IEHS).

This sequence belongs to the MntP (TC 9.B.29) family.

It is found in the cell inner membrane. Its function is as follows. Probably functions as a manganese efflux pump. The sequence is that of Putative manganese efflux pump MntP 2 from Wolinella succinogenes (strain ATCC 29543 / DSM 1740 / CCUG 13145 / JCM 31913 / LMG 7466 / NCTC 11488 / FDC 602W) (Vibrio succinogenes).